Consider the following 561-residue polypeptide: Cytochrome P450 monooxygenase iboC (561 aa).

Residues 8–28 form a helical membrane-spanning segment; sequence RFYYQLLAAVLIPALFVAWAA. Cysteine 484 contacts heme.

This sequence belongs to the cytochrome P450 family. The cofactor is heme.

The protein resides in the membrane. The protein operates within secondary metabolite biosynthesis. Cytochrome P450 monooxygenase; part of the gene cluster that mediates the biosynthesis of the psychoactive metabolites ibotenic acid and muscimol. The first committed step is glutamate hydroxylation by the 2-oxoglutarate-dependent dioxygenase iboH, and the last step is decarboxylation of ibotenic acid to muscimol by the decarboxylase iboD. The order of the intermediate reactions is somewhat ambiguous. IboA likely activates the carboxylic acid at position 5 to introduce an amide bond, and the flavin monooxygenase iboF generates the N-O bond. There are several options for the latter step. One option is that iboF directly hydroxylates the amide nitrogen formed by iboA to produce a hydroxamic acid species. Another option is that iboF hydroxylates an external N-containing compound, whose resulting N-O bond is subsequently introduced into the hydroxyglutamate scaffold. The paralogous PLP-dependent cystathionine gamma-synthase-like enzymes iboG1 and iboG2 are likely involved in substitution of the OH group at position 3 by the O-N moiety. The first cyclic intermediate is most probably tricholomic acid which is likely desaturated to ibotenic acid by the cytochrome P450 monooxygenase iboC. The chain is Cytochrome P450 monooxygenase iboC from Amanita muscaria (strain Koide BX008).